Here is a 1035-residue protein sequence, read N- to C-terminus: Cell-division control histidine kinase PdhS (1035 aa).

Positions M1–D613 are important for polar localization. The interval Q500–E533 is disordered. Residues A614 to D1035 are interaction with DivK. Positions H659–V730 constitute a PAS domain. Residues R802 to R1031 form the Histidine kinase domain. H805 carries the post-translational modification Phosphohistidine; by autocatalysis.

As to quaternary structure, interacts with DivK.

It localises to the cytoplasm. It catalyses the reaction ATP + protein L-histidine = ADP + protein N-phospho-L-histidine.. Its function is as follows. Functions as a polar differentiation marker. Essential protein that, by localizing in the old pole of dividing cells, controls cell division and maturation, probably through control of DivK phosphorylation status and cellular distribution, which in turn regulates CtrA, a transcriptional regulator of the minB operon. The asymmetrical localization of this protein is probably required for cells to enter a new division cycle. This Brucella abortus (strain S19) protein is Cell-division control histidine kinase PdhS (pdhS).